We begin with the raw amino-acid sequence, 380 residues long: MAPNLRKSHPLLKMVNNSLIDLPTPSNISSWWNFGSLLGICLMTQILTGLLLAMHYTADTTLAFSSVAHTCRNVQYGWLIRNLHANGASFFFICIYFHIGRGFYYGSYLYKETWNTGVILLLTLMATAFVGYVLPWGQMSFWGATVITNLFSAIPYIGQTLVEWAWGGFSVDNPTLTRFFALHFLLPFLIAGLTLIHLTFLHESGSNNPLGIVSNCDKIPFHPYFTLKDILGFTLMFLPLTTLALFSPNLLGDPENFTPANPLVTPPHIKPEWYFLFAYAILRSIPNKLGGVLALAASVLILFLIPFLHKAKQRTMTFRPISQLLFWILVANLLILTWVGSQPVEHPFIIIGQLASITYFTILLVLFPIIGALENKMLNY.

Helical transmembrane passes span 34–54 (FGSL…LLAM), 78–99 (WLIR…YFHI), 114–134 (WNTG…GYVL), and 179–199 (FFAL…IHLT). 2 residues coordinate heme b: His-84 and His-98. Heme b is bound by residues His-183 and His-197. His-202 is a binding site for a ubiquinone. A run of 4 helical transmembrane segments spans residues 227 to 247 (LKDI…ALFS), 289 to 309 (LGGV…PFLH), 321 to 341 (ISQL…WVGS), and 348 to 368 (FIII…VLFP).

Belongs to the cytochrome b family. The cytochrome bc1 complex contains 11 subunits: 3 respiratory subunits (MT-CYB, CYC1 and UQCRFS1), 2 core proteins (UQCRC1 and UQCRC2) and 6 low-molecular weight proteins (UQCRH/QCR6, UQCRB/QCR7, UQCRQ/QCR8, UQCR10/QCR9, UQCR11/QCR10 and a cleavage product of UQCRFS1). This cytochrome bc1 complex then forms a dimer. Heme b is required as a cofactor.

The protein localises to the mitochondrion inner membrane. Functionally, component of the ubiquinol-cytochrome c reductase complex (complex III or cytochrome b-c1 complex) that is part of the mitochondrial respiratory chain. The b-c1 complex mediates electron transfer from ubiquinol to cytochrome c. Contributes to the generation of a proton gradient across the mitochondrial membrane that is then used for ATP synthesis. The sequence is that of Cytochrome b (MT-CYB) from Pachyptila turtur (Fairy prion).